The primary structure comprises 875 residues: Ubiquitin-protein ligase E3A (875 aa).

The C4-type; atypical zinc finger occupies 44–83 (CGNEACTNEFCASCPTFLRMDNNAAAIKALELYKINAKLC). Residues 175–186 (KEELKSLQAKDE) show a composition bias toward basic and acidic residues. The interval 175–226 (KEELKSLQAKDEDKDEDEKEKAACSAAAMEEDSEASSSRIGDSSQGDNNLQK) is disordered. The segment covering 213 to 225 (RIGDSSQGDNNLQ) has biased composition (polar residues). Serine 218 carries the post-translational modification Phosphoserine. Positions 401-418 (IPESSELTLQELLGEERR) are E6-binding. Residues 418–517 (RNKKGPRVDP…TVLYSLVQGQ (100 aa)) form an interaction with HCV core protein region. Tyrosine 659 carries the phosphotyrosine; by ABL1 modification. The HECT domain maps to 776-875 (YDGGYTRDSV…ITYAKGFGML (100 aa)). Residue cysteine 843 is the Glycyl thioester intermediate of the active site.

In terms of assembly, the active form is probably a homotrimer. Binds UBQLN1 and UBQLN2. Interacts with the 26S proteasome. Interacts with BPY2. Interacts with HIF1AN, MAPK6 and NEURL4; interaction with MAPK6 may be mediated by NEURL4. Interacts with the proteasomal subunit PSMD4. Interacts with ESR1 and WBP2. Interacts with BMAL1. Interacts with ARC. (Microbial infection) Interacts with HCV core protein and targets it to degradation. As to quaternary structure, (Microbial infection) Interacts with the E6 protein of the cancer-associated human papillomavirus types 16 and 18. The E6/E6-AP complex binds to and targets the p53/TP53 tumor-suppressor protein for ubiquitin-mediated proteolysis. Phosphorylation at Tyr-659 by ABL1 impairs E3 ligase activity and protects p53/TP53 from degradation in (HPV)-infected cells.

The protein resides in the cytoplasm. It localises to the nucleus. The enzyme catalyses S-ubiquitinyl-[E2 ubiquitin-conjugating enzyme]-L-cysteine + [acceptor protein]-L-lysine = [E2 ubiquitin-conjugating enzyme]-L-cysteine + N(6)-ubiquitinyl-[acceptor protein]-L-lysine.. The protein operates within protein modification; protein ubiquitination. Functionally, E3 ubiquitin-protein ligase which accepts ubiquitin from an E2 ubiquitin-conjugating enzyme in the form of a thioester and transfers it to its substrates. Several substrates have been identified including the BMAL1, ARC, LAMTOR1, RAD23A and RAD23B, MCM7 (which is involved in DNA replication), annexin A1, the PML tumor suppressor, and the cell cycle regulator CDKN1B. Additionally, may function as a cellular quality control ubiquitin ligase by helping the degradation of the cytoplasmic misfolded proteins. Finally, UBE3A also promotes its own degradation in vivo. Plays an important role in the regulation of the circadian clock: involved in the ubiquitination of the core clock component BMAL1, leading to its proteasomal degradation. Acts as transcriptional coactivator of progesterone receptor PGR upon progesterone hormone activation. Acts as a regulator of synaptic development by mediating ubiquitination and degradation of ARC. Required for synaptic remodeling in neurons by mediating ubiquitination and degradation of LAMTOR1, thereby limiting mTORC1 signaling and activity-dependent synaptic remodeling. Synergizes with WBP2 in enhancing PGR activity. Its function is as follows. (Microbial infection) Catalyzes the high-risk human papilloma virus E6-mediated ubiquitination of p53/TP53, contributing to the neoplastic progression of cells infected by these viruses. The protein is Ubiquitin-protein ligase E3A of Homo sapiens (Human).